Consider the following 205-residue polypeptide: Large ribosomal subunit protein bL9 (205 aa).

The tract at residues 160 to 205 is disordered; the sequence is RDRKSRNAAAASEVQDAPVEDGGDEVVSVDSVAAEDGGADASGGTA. A compositionally biased stretch (low complexity) spans 184–195; it reads EVVSVDSVAAED.

This sequence belongs to the bacterial ribosomal protein bL9 family.

Functionally, binds to the 23S rRNA. This is Large ribosomal subunit protein bL9 from Anaplasma phagocytophilum (strain HZ).